Reading from the N-terminus, the 753-residue chain is Transcription factor SOX-30 (753 aa).

Disordered stretches follow at residues 1-45 and 140-161; these read MERA…TLSA and QELGPGLDPSVGPRGGVETGPR. Over residues 7–22 the composition is skewed to pro residues; that stretch reads EPQPQQRPLRPAPPLL. Positions 337–405 form a DNA-binding region, HMG box; that stretch reads VKRPMNAFMV…KHREEFPGWV (69 aa). Disordered regions lie at residues 514 to 540 and 726 to 753; these read AGPSQTDTHQLHSEGTHTVKQPTPVSL and PTSTPSSIQQVNVTDSDEEEEEKVLRDL. Polar residues-rich tracts occupy residues 531–540 and 726–739; these read TVKQPTPVSL and PTSTPSSIQQVNVT.

As to quaternary structure, interacts with CTNNB1, competitively inhibiting CTNNB1-TCF7L2/TCF4 interaction.

The protein resides in the nucleus. Its subcellular location is the cytoplasm. Its function is as follows. Acts both as a transcriptional activator and a repressor. Binds to the DNA sequence 5'-ACAAT-3' and shows a preference for guanine residues surrounding this core motif. Binds to its own promoter and activates its own transcription. Required to activate the expression of postmeiotic genes involved in spermiogenesis. Binds to the promoter region of CTNNB1 and represses its transcription which leads to inhibition of Wnt signaling. Also inhibits Wnt signaling by binding to the CTNNB1 protein, preventing interaction of CTNNB1 with TCF7L2/TCF4. This is Transcription factor SOX-30 (SOX30) from Macaca fascicularis (Crab-eating macaque).